Here is a 208-residue protein sequence, read N- to C-terminus: Large ribosomal subunit protein bL25 (208 aa).

A disordered region spans residues 1–21 (MSNEFSLNAEKRDVQGKGASR).

The protein belongs to the bacterial ribosomal protein bL25 family. CTC subfamily. Part of the 50S ribosomal subunit; part of the 5S rRNA/L5/L18/L25 subcomplex. Contacts the 5S rRNA. Binds to the 5S rRNA independently of L5 and L18.

Its function is as follows. This is one of the proteins that binds to the 5S RNA in the ribosome where it forms part of the central protuberance. The chain is Large ribosomal subunit protein bL25 from Hahella chejuensis (strain KCTC 2396).